Consider the following 880-residue polypeptide: MLTSDLRLLFLDFFAKRGHKVSPSASLISNDPSVMFTIAGMLPFIQCFLALEPPPHPRVVSVQKCIRTSDIDEVGKTPRHGTFFQMMGNFSFGDYFKKEAIEYAWEFLLSELDLAPDRLWVTIHGDDKESEKFWLLCGVPQERVQSLDSNFWSTGKAGPAGPCSEVFYDLHGGPGPGPEGDPDRYLEVWNLVFMQNLRDNDGHIISSLPKKCVDTGMGLERIAMITQGVGTIYDTDELKPILDEAGYISGKRYGKDRRDDISLRVLADHIRSSLMLVADGLRPSNEGRGYILRRLLRRSVRAAKLLGIQENCFDQLFAKAAQVMKVGYPELEGKLAEIKQVACLEEQSFSRALNAGTQLLSRSMSSSKKRVSGDLAFRLHDTHGFPIDLITEIAKDSGLDVDMDGFFTLMKEQKDRSRAALSRSKPIVSDTTGYEGLRSNFLGYEMLQVDTKITALVKDGTILTSAKQGDCVDIALEQTPFYATAGGQEADRGFIESDNFSGKVVTVFSPLPGLTVHRCEIVSGLVVSGEVVRASVDSANRFAACQSHTATHVIHAVVREMFGSTSVQMGSYNRAGYLRFDFSCSYAPTDSQRIELEERANRAIQSCLEISSTYTTLEKAVASGAIALFGERYGDTVRMVEIGGPWSRELCAGTHLRNSSEIAVVSLVSETSVASGIRRVECLTGFDAFSHFAQERALVDTVMRTLGATRQEMEGAIDDLRENLKRSKHALQTAKDKFLSAFAPRLLQEFKSVSSVRILIADLSKFLSGPLFSPFEFTAEDIRAVTLRCKKLLEEPHVLLLAAVISGRVHAACSIDLSSVKLSCMDDLSANNLIKVFLKTLDGSGGGRADFAQGAGWNAKLLDSALDNLKACVIGKLSGV.

Zn(2+) is bound by residues His-548, His-552, Cys-651, and His-655.

This sequence belongs to the class-II aminoacyl-tRNA synthetase family. Zn(2+) serves as cofactor.

It localises to the cytoplasm. The catalysed reaction is tRNA(Ala) + L-alanine + ATP = L-alanyl-tRNA(Ala) + AMP + diphosphate. Catalyzes the attachment of alanine to tRNA(Ala) in a two-step reaction: alanine is first activated by ATP to form Ala-AMP and then transferred to the acceptor end of tRNA(Ala). Also edits incorrectly charged Ser-tRNA(Ala) and Gly-tRNA(Ala) via its editing domain. The chain is Alanine--tRNA ligase from Tropheryma whipplei (strain TW08/27) (Whipple's bacillus).